The sequence spans 540 residues: GMP synthase [glutamine-hydrolyzing] (540 aa).

The Glutamine amidotransferase type-1 domain occupies 26 to 216 (IIIILDFGSQ…VYHICECEPT (191 aa)). Cysteine 103 functions as the Nucleophile in the catalytic mechanism. Residues histidine 190 and glutamate 192 contribute to the active site. The 199-residue stretch at 217–415 (WTTAAFVEEA…VGLPEEIVQR (199 aa)) folds into the GMPS ATP-PPase domain. 244–250 (SGGVDSS) contributes to the ATP binding site.

Homodimer.

The catalysed reaction is XMP + L-glutamine + ATP + H2O = GMP + L-glutamate + AMP + diphosphate + 2 H(+). It participates in purine metabolism; GMP biosynthesis; GMP from XMP (L-Gln route): step 1/1. In terms of biological role, catalyzes the synthesis of GMP from XMP. The polypeptide is GMP synthase [glutamine-hydrolyzing] (Trichormus variabilis (strain ATCC 29413 / PCC 7937) (Anabaena variabilis)).